Here is a 1031-residue protein sequence, read N- to C-terminus: MASTSLVDSLTSHFPLTLPIPTPITHPHLIPSADLPVEEDLLHNPENLRSWLSYIHNVKEKIAADEPAKGGVLSPEEEILGPLASKNARDGLQRLVSIYERAIAVFPTSYKLWKAYYLTRQSYVLGELTNDAKEARSQQAKRGAAYKTNVRELLDGAEEAHEWTGGLDPVVGYAEWRSLVATGERMIMCLPNLPIPWLLHLGVLLHPKCPSVFKNGSYARRAFDRALRTLPPSLHGRVWGLYLRWAEIVGGDAGERVWRRYLKVDPSLTERHITYLLEAEEPRPLAAAKYLLSIARRAQQNLYSSLEGKSPYQLFVDFLELVEKYADQIGMDEEGTLELQRTKRAVEEKVDGEQPQVEGQEQQPQEEPASINGRLMRIAGPPVPLEQGKLFKPVNAASAQAPTQLTYDEDTDPSNPRLLDVEGIVERDGLQVYKDQAGRLWTGLATYWIKRGEFERATATFERGLAAVVTIRDFTQIFDAYAEFSETMISTLMDALADEDNLEDEDFDAEETEQELDERMKSFEELMDRRPFLVNDVLLRRNPNEVVEWEKRIALHGDDDAKVVEAYVKALDTINPRKATGPLYPLYVNFAKFYEEGGSKDDNGEPRNEPDLEQARKIFERATKVPFKAVDELAEVWCEWAEMELRNENYEEAIRLMQRATTVPKNTKINYYDDNIPPQSRLFKSLKLWSYYSDLEESIGTVESTKAVYDKIMELKIANAQVIVNYATFLEENKYFEESFKVYERGIELFHFPIAFEIWNIYLSKFVKRYGGKKLERARDLFEQALENCPEKFCKPLYLMYAKLEEEHGLAKRAMGIYDRAASTVQDSDKFEMYTIYIAKATANFGLPATRPIYERALESLPDKQTAEMCRRFARMERKLGEIDRARAIYAHASQFCDPRIEPEFWQEWNDFEIETGSEDTFREMLRIKRAVQASFNTETSFIAAQAAAASKGTEKPTDTSAQEAQDAADPMAAMERELSAAGADGARKGGAPAFVASTLNKTNANGIDEGGEETGEMANPDAIVMDEDEF.

4 HAT repeats span residues 28 to 60 (HLIPSADLPVEEDLLHNPENLRSWLSYIHNVKE), 90 to 122 (DGLQRLVSIYERAIAVFPTSYKLWKAYYLTRQS), 214 to 248 (KNGSYARRAFDRALRTLPPSLHGRVWGLYLRWAEI), and 250 to 269 (GGDAGERVWRRYLKVDPSLT). The disordered stretch occupies residues 346–368 (VEEKVDGEQPQVEGQEQQPQEEP). The span at 353–368 (EQPQVEGQEQQPQEEP) shows a compositional bias: low complexity. HAT repeat units follow at residues 452–487 (GEFERATATFERGLAAVVTIRDFTQIFDAYAEFSET), 610–646 (PDLEQARKIFERATKVPFKAVDELAEVWCEWAEMELR), 664–698 (PKNTKINYYDDNIPPQSRLFKSLKLWSYYSDLEES), 700–732 (GTVESTKAVYDKIMELKIANAQVIVNYATFLEE), 734–768 (KYFEESFKVYERGIELFHFPIAFEIWNIYLSKFVK), 773–807 (KKLERARDLFEQALENCPEKFCKPLYLMYAKLEEE), 845–879 (FGLPATRPIYERALESLPDKQTAEMCRRFARMERK), and 881–915 (GEIDRARAIYAHASQFCDPRIEPEFWQEWNDFEIE). 2 disordered regions span residues 948–969 (AAASKGTEKPTDTSAQEAQDAA) and 1003–1031 (TNANGIDEGGEETGEMANPDAIVMDEDEF).

This sequence belongs to the crooked-neck family. In terms of assembly, associated with the spliceosome.

It is found in the nucleus. Involved in pre-mRNA splicing and cell cycle progression. This chain is Pre-mRNA-splicing factor SYF1 (SYF1), found in Cryptococcus neoformans var. neoformans serotype D (strain B-3501A) (Filobasidiella neoformans).